The following is a 587-amino-acid chain: Beta-(1--&gt;2)glucan export ATP-binding/permease protein NdvA (587 aa).

The 281-residue stretch at 21–301 (VSLVVIANIV…MRQFATQIFE (281 aa)) folds into the ABC transmembrane type-1 domain. Transmembrane regions (helical) follow at residues 23–43 (LVVI…ILFG), 57–77 (PILF…VLVS), 126–146 (LFGL…ALAL), 158–178 (LSAV…VVMS), 248–268 (MAST…VQSG), and 272–292 (IGDV…LDLM). Residues 335–569 (IEFRDVSFGF…NGRFAALLRA (235 aa)) enclose the ABC transporter domain. Residue 368–375 (GPTGAGKT) participates in ATP binding.

The protein belongs to the ABC transporter superfamily. Beta-(1--&gt;2)glucan exporter (TC 3.A.1.108.1) family. As to quaternary structure, homodimer.

It is found in the cell inner membrane. It catalyses the reaction [(1-&gt;2)-beta-D-glucosyl](n)(in) + ATP + H2O = [(1-&gt;2)-beta-D-glucosyl](n)(out) + ADP + phosphate + H(+). Functionally, involved in beta-(1--&gt;2)glucan export. Transmembrane domains (TMD) form a pore in the inner membrane and the ATP-binding domain (NBD) is responsible for energy generation. In Rhizobium etli (strain ATCC 51251 / DSM 11541 / JCM 21823 / NBRC 15573 / CFN 42), this protein is Beta-(1--&gt;2)glucan export ATP-binding/permease protein NdvA.